The sequence spans 319 residues: Methionyl-tRNA formyltransferase (319 aa).

116-119 lines the (6S)-5,6,7,8-tetrahydrofolate pocket; it reads SLLP.

This sequence belongs to the Fmt family.

It carries out the reaction L-methionyl-tRNA(fMet) + (6R)-10-formyltetrahydrofolate = N-formyl-L-methionyl-tRNA(fMet) + (6S)-5,6,7,8-tetrahydrofolate + H(+). Functionally, attaches a formyl group to the free amino group of methionyl-tRNA(fMet). The formyl group appears to play a dual role in the initiator identity of N-formylmethionyl-tRNA by promoting its recognition by IF2 and preventing the misappropriation of this tRNA by the elongation apparatus. In Treponema pallidum (strain Nichols), this protein is Methionyl-tRNA formyltransferase.